The following is an 864-amino-acid chain: MGSLDTVDMGQRAIDQIISELSLNEKVSLLSGVDAWHTFAIPRLGIPSIRTTDGPNGARGTRYFNGVPSACLPCGTALGATFDKDLIFSLGQLLAAECKAKGAHVLLGPTINIQRGPLGGRGFESFSEDPVLSGLAAASYCSGVQDGGVVPTLKHLVCNDQEHERVAVSALVTPRALREIYLLPFQLAIRGARPGAVMTSYNKVNGLHASESPGLIRDILRGEWGYEGAVISDWFGTYSVADAVNAGLDLEMPGPTRFRGPALMHALTSNKVSEKTLNERVRKVLELVQLASRSRVPEYAPERKLNRPEDRALLRRAAGESVVLLKNDKNDNNNSPILPLDREKKTLVIGPNADIAAYCGGGSASLLAYYTVTPRQGIADKCGADQVVFSQGCYGHKELPLLGEHLRTIETGEPGYTFRVYTEPPAASGSFKGNGSRKPVDELHMTNSSAFLMDYSHPQISGDTYYATLEGTLEPPESGVYEFGLTVAGTGLLYIDGVLVVDNKTVQRAGTSFFGIGTVEERGERYLEAGKKHHVFVEFGTAPTSNLQHHGVVSFGPGGLRLGGCRKLDTDAAIQQAVQSAAQTDQVVVCVGLSGDWESEGFDRPHMDLPPGTDELVNAVLEVQPNAVIVVQSGTPVTMPWADKAKALLQAWYGGNEAGNGIADVLFGDVNPSAKLPLTFPRELSQNPSYLSYRSERGRVLYSEDIYVGYRYYDKARQPPLFRFGHGLSYTTFHLSDLAVRETAPYAANIKESSLRVSVTVSNTGARPGAEVVLVYVRPPPATCSVGRPVRELKGYEKVMLQPGETREVSIAIPVGYATSFWDEGCDAWLSEKGLYFVEAVGTGECNTLVAPLSVQVSRMWNGL.

Asp233 is an active-site residue. The PA14 domain occupies 411–578 (TGEPGYTFRV…DTDAAIQQAV (168 aa)). N-linked (GlcNAc...) asparagine glycans are attached at residues Asn434, Asn447, and Asn503.

The protein belongs to the glycosyl hydrolase 3 family.

The protein localises to the secreted. The enzyme catalyses Hydrolysis of terminal, non-reducing beta-D-glucosyl residues with release of beta-D-glucose.. It functions in the pathway glycan metabolism; cellulose degradation. Beta-glucosidases are one of a number of cellulolytic enzymes involved in the degradation of cellulosic biomass. Catalyzes the last step releasing glucose from the inhibitory cellobiose. The polypeptide is Probable beta-glucosidase J (bglJ) (Neosartorya fischeri (strain ATCC 1020 / DSM 3700 / CBS 544.65 / FGSC A1164 / JCM 1740 / NRRL 181 / WB 181) (Aspergillus fischerianus)).